Here is a 541-residue protein sequence, read N- to C-terminus: Transmembrane protein 151 homolog (541 aa).

Helical transmembrane passes span 27-47 (GYGK…YATF), 73-93 (YNFV…MECW), and 254-274 (PWFL…SWPL). The disordered stretch occupies residues 503–541 (ASISHSSSKDLKSLTLKSSSSNNNNNNSNNNNNDDPEHP). A compositionally biased stretch (low complexity) spans 515-535 (SLTLKSSSSNNNNNNSNNNNN).

Belongs to the TMEM151 family.

The protein localises to the membrane. The protein is Transmembrane protein 151 homolog of Caenorhabditis elegans.